Consider the following 488-residue polypeptide: Glycogen synthase (488 aa).

Lysine 16 is a binding site for ADP-alpha-D-glucose.

The protein belongs to the glycosyltransferase 1 family. Bacterial/plant glycogen synthase subfamily.

The catalysed reaction is [(1-&gt;4)-alpha-D-glucosyl](n) + ADP-alpha-D-glucose = [(1-&gt;4)-alpha-D-glucosyl](n+1) + ADP + H(+). It participates in glycan biosynthesis; glycogen biosynthesis. Synthesizes alpha-1,4-glucan chains using ADP-glucose. The protein is Glycogen synthase of Marinobacter nauticus (strain ATCC 700491 / DSM 11845 / VT8) (Marinobacter aquaeolei).